A 127-amino-acid polypeptide reads, in one-letter code: uncharacterized protein (127 aa).

This is an uncharacterized protein from Saccharomyces cerevisiae (strain ATCC 204508 / S288c) (Baker's yeast).